We begin with the raw amino-acid sequence, 488 residues long: Glutamate--tRNA ligase (488 aa).

Residues proline 16–threonine 26 carry the 'HIGH' region motif. The 'KMSKS' region signature appears at lysine 257 to arginine 261. Lysine 260 is a binding site for ATP.

This sequence belongs to the class-I aminoacyl-tRNA synthetase family. Glutamate--tRNA ligase type 1 subfamily. As to quaternary structure, monomer.

The protein localises to the cytoplasm. It catalyses the reaction tRNA(Glu) + L-glutamate + ATP = L-glutamyl-tRNA(Glu) + AMP + diphosphate. In terms of biological role, catalyzes the attachment of glutamate to tRNA(Glu) in a two-step reaction: glutamate is first activated by ATP to form Glu-AMP and then transferred to the acceptor end of tRNA(Glu). The protein is Glutamate--tRNA ligase of Rhizobium johnstonii (strain DSM 114642 / LMG 32736 / 3841) (Rhizobium leguminosarum bv. viciae).